Reading from the N-terminus, the 332-residue chain is Long form salivary protein D7L1 (332 aa).

The signal sequence occupies residues Met1–Ala21. Intrachain disulfides connect Cys40–Cys77 and Cys73–Cys133. Trp61 is a binding site for leukotriene E4. Lys176 contacts leukotriene E4. 3 disulfides stabilise this stretch: Cys184-Cys219, Cys200-Cys331, and Cys259-Cys278. Noradrenaline-binding residues include Glu185 and Arg203. 2 residues coordinate noradrenaline: Asp294 and Glu297.

Belongs to the PBP/GOBP family. Female mosquito salivary gland (at protein level).

It localises to the secreted. Modulates blood feeding of female mosquitoes on vertebrate species by binding and sequestering different mediators involved in the host response, such as biogenic amines and eicosanoids. Binds dopamine, serotonin, histamine, tryptamine, adrenaline, noradrenaline, leukotriene B4, leukotriene C4, leukotriene D4, leukotriene E4 and U-46619, a stable analog of thromboxane A2. Inhibits platelet aggregation induced by serotonin and low doses of thromboxane A2 analog U-46619 but not by high doses of U-46619, collagen or ADP. Prevents leukocyte recruitment. The chain is Long form salivary protein D7L1 from Aedes albopictus (Asian tiger mosquito).